Here is a 408-residue protein sequence, read N- to C-terminus: Gustatory receptor 10a (408 aa).

At 1 to 20 the chain is on the cytoplasmic side; it reads MTSPDERKSFWERHEFKFYR. Residues 21–38 traverse the membrane as a helical segment; sequence YGHVYALIYGQVVIDYVP. Residues 39 to 48 lie on the Extracellular side of the membrane; it reads QRALKRGVKV. The chain crosses the membrane as a helical span at residues 49 to 69; sequence LLIAYGHLFSMLLIVVLPGYF. The Cytoplasmic portion of the chain corresponds to 70–86; it reads CYHFRTLTDTLDRRLQL. Residues 87–107 traverse the membrane as a helical segment; sequence LFYVSFTNTAIKYATVIVTYV. At 108 to 144 the chain is on the extracellular side; that stretch reads ANTVHFEAINQRCTMQRTHLEFEFKNAPQEPKRPFEF. The chain crosses the membrane as a helical span at residues 145–165; sequence FMYFKFCLINLMMMIQVCGIF. At 166 to 270 the chain is on the cytoplasmic side; sequence AQYGEVGKGS…RESFRMHQFQ (105 aa). A helical membrane pass occupies residues 271-291; the sequence is LIGLMLSTLINNLTNFYTLFH. The Extracellular portion of the chain corresponds to 292–304; it reads MLAKQSLEEVSYP. The chain crosses the membrane as a helical span at residues 305–325; it reads VVVGSVYATGFYIDTYIVALI. Over 326–381 the chain is Cytoplasmic; that stretch reads NEHIKLELEAVALTMRRFAEPREMDERLTREIEHLSLELLNYQPPMLCGLLHLDRR. Residues 382 to 402 form a helical membrane-spanning segment; that stretch reads LVYLIAVTAFSYFITLVQFDL. At 403 to 408 the chain is on the extracellular side; sequence YLRKKS.

The protein belongs to the insect chemoreceptor superfamily. Gustatory receptor (GR) family. Gr10a subfamily. Expressed in the medial aspect of the third antennal segment, and in neurons of the terminal external chemosensory organ of larvae.

The protein resides in the cell membrane. Functionally, probable gustatory receptor which mediates acceptance or avoidance behavior, depending on its substrates. The polypeptide is Gustatory receptor 10a (Gr10a) (Drosophila melanogaster (Fruit fly)).